The following is a 436-amino-acid chain: GTPase Der (436 aa).

2 EngA-type G domains span residues 3–168 and 177–352; these read PLIA…PESD and IRLA…DNRA. GTP contacts are provided by residues 9–16, 56–60, 120–123, 183–190, 230–234, and 295–298; these read GRPNVGKS, DTGGY, NKVE, DTAGL, and NKWD. The region spanning 353–436 is the KH-like domain; sequence RKISTSALNR…VTISLRFLQK (84 aa).

Belongs to the TRAFAC class TrmE-Era-EngA-EngB-Septin-like GTPase superfamily. EngA (Der) GTPase family. As to quaternary structure, associates with the 50S ribosomal subunit.

Its function is as follows. GTPase that plays an essential role in the late steps of ribosome biogenesis. This Chlorobium phaeovibrioides (strain DSM 265 / 1930) (Prosthecochloris vibrioformis (strain DSM 265)) protein is GTPase Der.